Reading from the N-terminus, the 393-residue chain is F-box protein KIB4 (393 aa).

Residues 12-59 enclose the F-box domain; the sequence is AKQPILVLDLVRLVLERLSFVDFHRARCVSSVWYSASKSCIGGTNPTA.

Its subcellular location is the cytoplasm. It is found in the nucleus. The protein resides in the nucleolus. Component of SCF(ASK-cullin-F-box) E3 ubiquitin ligase complexes, which may mediate the ubiquitination and subsequent proteasomal degradation of target proteins. Required for brassinosteroid (BR) signal transduction. Mediates ASK7/BIN2/SK21 inactivation both by competing with substrate binding (e.g. BZR1) and by promoting its ubiquitination and subsequent proteasomal degradation. The protein is F-box protein KIB4 of Arabidopsis thaliana (Mouse-ear cress).